A 158-amino-acid chain; its full sequence is Probable host range protein 2-1 (158 aa).

This sequence belongs to the poxviridae C7 protein family.

Its function is as follows. Plays a role for multiplication of the virus in different cell types. This is Probable host range protein 2-1 from Oryctolagus cuniculus (Rabbit).